The chain runs to 183 residues: ATP-dependent protease subunit HslV (183 aa).

Thr-2 is an active-site residue. Na(+) is bound by residues Gly-157, Cys-160, and Thr-163.

This sequence belongs to the peptidase T1B family. HslV subfamily. As to quaternary structure, a double ring-shaped homohexamer of HslV is capped on each side by a ring-shaped HslU homohexamer. The assembly of the HslU/HslV complex is dependent on binding of ATP.

Its subcellular location is the cytoplasm. It carries out the reaction ATP-dependent cleavage of peptide bonds with broad specificity.. With respect to regulation, allosterically activated by HslU binding. Protease subunit of a proteasome-like degradation complex believed to be a general protein degrading machinery. The sequence is that of ATP-dependent protease subunit HslV from Vibrio parahaemolyticus serotype O3:K6 (strain RIMD 2210633).